Here is a 515-residue protein sequence, read N- to C-terminus: Fatty acyl-CoA reductase 1 (515 aa).

At 1-465 the chain is on the cytoplasmic side; that stretch reads MVSIPEYYEG…ARKHLNKLRN (465 aa). Positions 451-507 are necessary and sufficient for PEX19-mediated localization into peroxisome membrane; that stretch reads SGLPAARKHLNKLRNIRYGFNTILVILIWRIFIARSQMARNIWYFVVSLCYKFLSYF. A helical transmembrane segment spans residues 466-483; sequence IRYGFNTILVILIWRIFI. Residues 484-515 are Peroxisomal-facing; that stretch reads ARSQMARNIWYFVVSLCYKFLSYFRASSTMRY.

This sequence belongs to the fatty acyl-CoA reductase family. As to quaternary structure, interacts with PEX19; PEX19 mediates the targeting of FAR1 to peroxisomes. As to expression, widely expressed. Expressed in all tissues examined. Highest expression seen in preputial gland. Expressed in the brain where large quantities of ether lipids are synthesized.

It localises to the peroxisome membrane. It catalyses the reaction a long-chain fatty acyl-CoA + 2 NADPH + 2 H(+) = a long-chain primary fatty alcohol + 2 NADP(+) + CoA. The catalysed reaction is hexadecanoyl-CoA + 2 NADPH + 2 H(+) = hexadecan-1-ol + 2 NADP(+) + CoA. It carries out the reaction octadecanoyl-CoA + 2 NADPH + 2 H(+) = octadecan-1-ol + 2 NADP(+) + CoA. The enzyme catalyses (9Z)-octadecenoyl-CoA + 2 NADPH + 2 H(+) = (9Z)-octadecen-1-ol + 2 NADP(+) + CoA. It catalyses the reaction (9Z,12Z)-octadecadienoyl-CoA + 2 NADPH + 2 H(+) = (9Z,12Z)-octadecadien-1-ol + 2 NADP(+) + CoA. The catalysed reaction is eicosanoyl-CoA + 2 NADPH + 2 H(+) = eicosan-1-ol + 2 NADP(+) + CoA. It carries out the reaction 16-methylheptadecanoyl-CoA + 2 NADPH + 2 H(+) = 16-methylheptadecan-1-ol + 2 NADP(+) + CoA. The enzyme catalyses 18-methylnonadecanoyl-CoA + 2 NADPH + 2 H(+) = 18-methylnonadecan-1-ol + 2 NADP(+) + CoA. Functionally, catalyzes the reduction of saturated and unsaturated C16 or C18 fatty acyl-CoA to fatty alcohols. It plays an essential role in the production of ether lipids/plasmalogens which synthesis requires fatty alcohols. In parallel, it is also required for wax monoesters production since fatty alcohols also constitute a substrate for their synthesis. The sequence is that of Fatty acyl-CoA reductase 1 from Mus musculus (Mouse).